A 1036-amino-acid chain; its full sequence is Phospholipase D1 (1036 aa).

The PX domain occupies Ile81 to Ser212. A PH domain is found at Pro219–Gln328. Residues Cys240 and Cys241 are each lipidated (S-palmitoyl cysteine). In terms of domain architecture, PLD phosphodiesterase 1 spans Tyr459–Arg486. Positions His463–Ala890 are catalytic. Residues Ser499, Ser561, and Ser591 each carry the phosphoserine modification. Positions Glu853–Ser880 constitute a PLD phosphodiesterase 2 domain.

This sequence belongs to the phospholipase D family. In terms of assembly, interacts with PIP5K1B.

It localises to the cytoplasm. It is found in the perinuclear region. The protein localises to the endoplasmic reticulum membrane. Its subcellular location is the golgi apparatus membrane. The protein resides in the late endosome membrane. It catalyses the reaction a 1,2-diacyl-sn-glycero-3-phosphocholine + H2O = a 1,2-diacyl-sn-glycero-3-phosphate + choline + H(+). With respect to regulation, stimulated by phosphatidylinositol 4,5-bisphosphate and phosphatidylinositol 3,4,5-trisphosphate, activated by the phosphokinase C-alpha, by the ADP-ribosylation factor-1 (ARF-1), and to a lesser extent by GTP-binding proteins: RHO A, RAC-1 and CDC42. Its function is as follows. Implicated as a critical step in numerous cellular pathways, including signal transduction, membrane trafficking, and the regulation of mitosis. May be involved in the regulation of perinuclear intravesicular membrane traffic. In Cricetulus griseus (Chinese hamster), this protein is Phospholipase D1 (PLD1).